We begin with the raw amino-acid sequence, 94 residues long: ESAT-6-like protein EsxL (94 aa).

It belongs to the WXG100 family. ESAT-6 subfamily. In terms of assembly, strongly interacts with EsxK to form a heterodimeric complex under reducing conditions.

The protein localises to the secreted. The polypeptide is ESAT-6-like protein EsxL (Mycobacterium bovis (strain ATCC BAA-935 / AF2122/97)).